The sequence spans 386 residues: S-adenosylmethionine synthase (386 aa).

H16 is an ATP binding site. D18 serves as a coordination point for Mg(2+). Residue E44 coordinates K(+). E57 and Q100 together coordinate L-methionine. A flexible loop region spans residues 100 to 110; the sequence is QSRDIAQGVDR. ATP is bound by residues 165 to 167, D240, 246 to 247, A263, and K267; these read DAK and RK. D240 provides a ligand contact to L-methionine. K271 is a binding site for L-methionine.

It belongs to the AdoMet synthase family. Homotetramer; dimer of dimers. The cofactor is Mg(2+). Requires K(+) as cofactor.

The protein localises to the cytoplasm. The enzyme catalyses L-methionine + ATP + H2O = S-adenosyl-L-methionine + phosphate + diphosphate. It participates in amino-acid biosynthesis; S-adenosyl-L-methionine biosynthesis; S-adenosyl-L-methionine from L-methionine: step 1/1. In terms of biological role, catalyzes the formation of S-adenosylmethionine (AdoMet) from methionine and ATP. The overall synthetic reaction is composed of two sequential steps, AdoMet formation and the subsequent tripolyphosphate hydrolysis which occurs prior to release of AdoMet from the enzyme. The polypeptide is S-adenosylmethionine synthase (Francisella tularensis subsp. holarctica (strain FTNF002-00 / FTA)).